A 167-amino-acid chain; its full sequence is Lipoprotein signal peptidase (167 aa).

3 consecutive transmembrane segments (helical) span residues 7-27, 61-81, and 87-107; these read LFLLLGLTLTAGLDQAVKYWV, FSHWGIIAITIIVIIFLLWLW, and NKFLMRFGLVLIIGGAIGNLI. Residues aspartate 117 and aspartate 136 contribute to the active site. Residues 126–146 traverse the membrane as a helical segment; sequence IFYFAIFNLADSFITLGVIVI.

It belongs to the peptidase A8 family.

The protein resides in the cell inner membrane. It catalyses the reaction Release of signal peptides from bacterial membrane prolipoproteins. Hydrolyzes -Xaa-Yaa-Zaa-|-(S,diacylglyceryl)Cys-, in which Xaa is hydrophobic (preferably Leu), and Yaa (Ala or Ser) and Zaa (Gly or Ala) have small, neutral side chains.. The protein operates within protein modification; lipoprotein biosynthesis (signal peptide cleavage). This protein specifically catalyzes the removal of signal peptides from prolipoproteins. In Bartonella tribocorum (strain CIP 105476 / IBS 506), this protein is Lipoprotein signal peptidase.